The sequence spans 407 residues: [Pyruvate dehydrogenase (acetyl-transferring)] kinase isozyme 2, mitochondrial (407 aa).

Positions 135–364 (LEYKDTYGDD…DAVIYLKALS (230 aa)) constitute a Histidine kinase domain. Phosphotyrosine is present on residues Y215 and Y216. ATP-binding positions include 251–258 (ELFKNAMR), D290, 309–310 (ST), and 325–330 (GFGYGL). The residue at position 376 (K376) is an N6-succinyllysine.

It belongs to the PDK/BCKDK protein kinase family. As to quaternary structure, homodimer, and heterodimer with PDK1. Interacts with the pyruvate dehydrogenase complex subunit DLAT, and is part of the multimeric pyruvate dehydrogenase complex that contains multiple copies of pyruvate dehydrogenase (E1), dihydrolipoamide acetyltransferase (DLAT, E2) and lipoamide dehydrogenase (DLD, E3). In terms of tissue distribution, detected in heart (at protein level).

It is found in the mitochondrion matrix. It catalyses the reaction L-seryl-[pyruvate dehydrogenase E1 alpha subunit] + ATP = O-phospho-L-seryl-[pyruvate dehydrogenase E1 alpha subunit] + ADP + H(+). In terms of biological role, kinase that plays a key role in the regulation of glucose and fatty acid metabolism and homeostasis via phosphorylation of the pyruvate dehydrogenase subunits PDHA1 and PDHA2. This inhibits pyruvate dehydrogenase activity, and thereby regulates metabolite flux through the tricarboxylic acid cycle, down-regulates aerobic respiration and inhibits the formation of acetyl-coenzyme A from pyruvate. Inhibition of pyruvate dehydrogenase decreases glucose utilization and increases fat metabolism. Mediates cellular responses to insulin. Plays an important role in maintaining normal blood glucose levels and in metabolic adaptation to nutrient availability. Via its regulation of pyruvate dehydrogenase activity, plays an important role in maintaining normal blood pH and in preventing the accumulation of ketone bodies under starvation. Plays a role in the regulation of cell proliferation and in resistance to apoptosis under oxidative stress. Plays a role in p53/TP53-mediated apoptosis. In Mus musculus (Mouse), this protein is [Pyruvate dehydrogenase (acetyl-transferring)] kinase isozyme 2, mitochondrial (Pdk2).